A 256-amino-acid chain; its full sequence is Enkurin (256 aa).

The SH3-binding signature appears at 83–89 (PKKPAVP). One can recognise an Enkurin domain in the interval 160–252 (KRNEEIKKAQ…IIEKHKIIYI (93 aa)). An interaction with TRPC proteins region spans residues 160–255 (KRNEEIKKAQ…KHKIIYIANN (96 aa)). The region spanning 176 to 187 (IQENLKKAAMKR) is the IQ domain.

Microtubule inner protein component of sperm flagellar doublet microtubules. Binds calmodulin via its IQ domain. Interacts with TRPC1, TRPC2, TRPC5, but not TRPC3. Interacts with CFAP45. In terms of tissue distribution, expressed in airway epithelial cells.

The protein localises to the cytoplasm. It localises to the cytoskeleton. Its subcellular location is the cilium axoneme. The protein resides in the flagellum axoneme. Its function is as follows. Adapter that functions to localize a calcium-sensitive signal transduction machinery in sperm to a calcium-permeable ion channel. Microtubule inner protein (MIP) part of the dynein-decorated doublet microtubules (DMTs) in cilia axoneme, which is required for motile cilia beating. In Homo sapiens (Human), this protein is Enkurin.